Here is a 55-residue protein sequence, read N- to C-terminus: MAKGGREKIKLESSAGTGHFYTTSKNKRTKPEKMELMKYDPTIRKHVAYKETKLK.

Over residues 1 to 11 the composition is skewed to basic and acidic residues; it reads MAKGGREKIKL. Residues 1 to 29 form a disordered region; that stretch reads MAKGGREKIKLESSAGTGHFYTTSKNKRT. Over residues 14–24 the composition is skewed to polar residues; that stretch reads SAGTGHFYTTS.

The protein belongs to the bacterial ribosomal protein bL33 family.

In Polynucleobacter asymbioticus (strain DSM 18221 / CIP 109841 / QLW-P1DMWA-1) (Polynucleobacter necessarius subsp. asymbioticus), this protein is Large ribosomal subunit protein bL33.